The sequence spans 274 residues: Large ribosomal subunit protein uL2 (274 aa).

Positions 223-274 (VAMNPVDHPHGGGEGRTGEGRHAVDPWGNLTKGYRTRNNKRTQSMIVSRRKK) are disordered. A compositionally biased stretch (basic and acidic residues) spans 229–246 (DHPHGGGEGRTGEGRHAV).

This sequence belongs to the universal ribosomal protein uL2 family. Part of the 50S ribosomal subunit. Forms a bridge to the 30S subunit in the 70S ribosome.

In terms of biological role, one of the primary rRNA binding proteins. Required for association of the 30S and 50S subunits to form the 70S ribosome, for tRNA binding and peptide bond formation. It has been suggested to have peptidyltransferase activity; this is somewhat controversial. Makes several contacts with the 16S rRNA in the 70S ribosome. The protein is Large ribosomal subunit protein uL2 of Verminephrobacter eiseniae (strain EF01-2).